Here is a 456-residue protein sequence, read N- to C-terminus: Bis(5'-adenosyl)-triphosphatase enpp4 (456 aa).

Positions 1–18 (MFNMKILVIPLFWGLVTG) are cleaved as a signal peptide. At 19–410 (YKGNSSDSSA…DQWCINLPEA (392 aa)) the chain is on the extracellular side. Residues aspartate 37 and threonine 73 each contribute to the Zn(2+) site. Threonine 73 (AMP-threonine intermediate) is an active-site residue. Residue asparagine 94 participates in substrate binding. Asparagine 148 carries N-linked (GlcNAc...) asparagine glycosylation. Tyrosine 157 is a substrate binding site. A glycan (N-linked (GlcNAc...) asparagine) is linked at asparagine 169. Zn(2+)-binding residues include aspartate 192, histidine 196, aspartate 240, and histidine 241. Substrate is bound at residue aspartate 192. The cysteines at positions 257 and 290 are disulfide-linked. 2 N-linked (GlcNAc...) asparagine glycosylation sites follow: asparagine 279 and asparagine 330. Histidine 339 is a Zn(2+) binding site. N-linked (GlcNAc...) asparagine glycosylation occurs at asparagine 389. A disulfide bridge connects residues cysteine 397 and cysteine 404. A helical transmembrane segment spans residues 411 to 431 (IGIVVSALLVLTMLTGLMIFM). Residues 432–456 (RSRASTSRPFSRLQLQEDDDDPLID) lie on the Cytoplasmic side of the membrane.

The protein belongs to the nucleotide pyrophosphatase/phosphodiesterase family. The cofactor is Zn(2+).

The protein resides in the cell membrane. The enzyme catalyses P(1),P(3)-bis(5'-adenosyl) triphosphate + H2O = AMP + ADP + 2 H(+). Its function is as follows. Hydrolyzes extracellular Ap3A into AMP and ADP, and Ap4A into AMP and ATP. Ap3A and Ap4A are diadenosine polyphosphates thought to induce proliferation of vascular smooth muscle cells. Acts as a procoagulant, mediating platelet aggregation at the site of nascent thrombus via release of ADP from Ap3A and activation of ADP receptors. The protein is Bis(5'-adenosyl)-triphosphatase enpp4 (Enpp4) of Mus musculus (Mouse).